The primary structure comprises 215 residues: MHLTAENLAARRGEDMIFINISFYLAAGEALVLTGRNGSGKSTLLRVVAGLLKPEKGTVIFGDKESPEGQHPGEVSHYLGHRNAMKNELTVAENLDFWRHFLRSTCSSADLSVEDATEAVGLSGISHLPFGYLSAGQQRRFAFAKLLVAHRPVWILDEPTAALDASADRLFAGLIEAHLAKGGIVLAATHQPLGLKNAQELKMTGFAGVDRGVWG.

The ABC transporter domain occupies 3–211 (LTAENLAARR…KMTGFAGVDR (209 aa)). ATP is bound at residue 35-42 (GRNGSGKS).

The protein belongs to the ABC transporter superfamily. CcmA exporter (TC 3.A.1.107) family. As to quaternary structure, the complex is composed of two ATP-binding proteins (CcmA) and two transmembrane proteins (CcmB).

The protein localises to the cell inner membrane. It catalyses the reaction heme b(in) + ATP + H2O = heme b(out) + ADP + phosphate + H(+). Functionally, part of the ABC transporter complex CcmAB involved in the biogenesis of c-type cytochromes; once thought to export heme, this seems not to be the case, but its exact role is uncertain. Responsible for energy coupling to the transport system. In Rhizobium etli (strain ATCC 51251 / DSM 11541 / JCM 21823 / NBRC 15573 / CFN 42), this protein is Cytochrome c biogenesis ATP-binding export protein CcmA.